A 159-amino-acid polypeptide reads, in one-letter code: Protransforming growth factor alpha (159 aa).

Residues 1–23 (MVPAAGQLALLALGILVAVCQAL) form the signal peptide. Positions 24 to 38 (ENSTSPLSDSPVAAA) are cleaved as a propeptide — removed in mature form. At 24-97 (ENSTSPLSDS…AVVAASQKKQ (74 aa)) the chain is on the extracellular side. An N-linked (GlcNAc...) asparagine glycan is attached at asparagine 25. The region spanning 42–82 (HFNKCPDSHTQYCFHGTCRFLVQEEKPACVCHSGYVGVRCE) is the EGF-like domain. Cystine bridges form between cysteine 46–cysteine 59, cysteine 54–cysteine 70, and cysteine 72–cysteine 81. A propeptide spans 89 to 159 (VVAASQKKQA…TACCHSETVV (71 aa)) (removed in mature form). A helical membrane pass occupies residues 98–123 (AITALVVVSIVALAVLIITCVLIHCC). The Cytoplasmic segment spans residues 124–159 (QVRKHCEWCRALVCRHEKPSALLKGRTACCHSETVV). S-palmitoyl cysteine attachment occurs at residues cysteine 152 and cysteine 153.

As to quaternary structure, interacts with the PDZ domains of MAGI3, SDCBP and SNTA1. The interaction with SDCBP, is required for the targeting to the cell surface. In the endoplasmic reticulum, in its immature form (i.e. with a prosegment and lacking full N-glycosylation), interacts with CNIH. In the Golgi apparatus, may form a complex with CNIH and GORASP2. Interacts (via cytoplasmic C-terminal domain) with NKD2.

It localises to the secreted. The protein resides in the extracellular space. It is found in the cell membrane. Functionally, TGF alpha is a mitogenic polypeptide that is able to bind to the EGF receptor/EGFR and to act synergistically with TGF beta to promote anchorage-independent cell proliferation in soft agar. This Rattus norvegicus (Rat) protein is Protransforming growth factor alpha (Tgfa).